A 265-amino-acid chain; its full sequence is Protein N-terminal and lysine N-methyltransferase EFM7 (265 aa).

The disordered stretch occupies residues 1-25 (MSSDHEEDSLYGATELFGEPDGFYE). Residues W67, 93–95 (GAA), D115, W152, and S176 contribute to the S-adenosyl-L-methionine site.

It belongs to the class I-like SAM-binding methyltransferase superfamily. EFM7 family.

It localises to the cytoplasm. Functionally, S-adenosyl-L-methionine-dependent protein methyltransferase that trimethylates the N-terminal glycine 'Gly-2' of elongation factor 1-alpha, before also catalyzing the mono- and dimethylation of 'Lys-3'. In Eremothecium gossypii (strain ATCC 10895 / CBS 109.51 / FGSC 9923 / NRRL Y-1056) (Yeast), this protein is Protein N-terminal and lysine N-methyltransferase EFM7.